The sequence spans 327 residues: Meiotic coiled-coil protein 6 (327 aa).

The stretch at 66–188 (DAFERDSTQR…TETKEMNKIK (123 aa)) forms a coiled coil. Residues 175–199 (RRMETETKEMNKIKPKNDSESDRFK) are compositionally biased toward basic and acidic residues. The segment at 175–234 (RRMETETKEMNKIKPKNDSESDRFKRNSQSLSQQSPLLDVHSPDNSNHRTMLNINNSSPI) is disordered. Residues 202-212 (SQSLSQQSPLL) show a composition bias toward low complexity. Polar residues predominate over residues 217 to 232 (PDNSNHRTMLNINNSS). The stretch at 243–297 (NEVKNRISRLQKTFADLENQHHSFQQICQTLRKRLENDSSTTKQRLSKLEEIIRN) forms a coiled coil.

As to quaternary structure, interacts with alp4, kms1 and mbo1.

It is found in the nucleus. The protein localises to the cytoplasm. The protein resides in the cytoskeleton. It localises to the microtubule organizing center. Its subcellular location is the spindle pole body. Functionally, has a role in meiotic nuclear oscillation and recombination. Required to remodel astral microtubules into the 'horsetail' astral array maintaining the 'horsetail' nuclear movement. Promotes homologous paring of chromosomes during this movement. This Schizosaccharomyces pombe (strain 972 / ATCC 24843) (Fission yeast) protein is Meiotic coiled-coil protein 6 (mcp6).